The primary structure comprises 328 residues: Ketol-acid reductoisomerase (NADP(+)) (328 aa).

The KARI N-terminal Rossmann domain occupies 1–179 (MRVLYERDGD…GGGAAGIIET (179 aa)). Residues 24–27 (YGSQ), arginine 47, and serine 51 each bind NADP(+). Histidine 106 is a catalytic residue. Residue glycine 132 coordinates NADP(+). The KARI C-terminal knotted domain maps to 180–325 (TFVDETETDL…ARLRSRMTCA (146 aa)). Residues aspartate 188, glutamate 192, glutamate 224, and glutamate 228 each coordinate Mg(2+). Position 249 (serine 249) interacts with substrate.

The protein belongs to the ketol-acid reductoisomerase family. The cofactor is Mg(2+).

It carries out the reaction (2R)-2,3-dihydroxy-3-methylbutanoate + NADP(+) = (2S)-2-acetolactate + NADPH + H(+). The catalysed reaction is (2R,3R)-2,3-dihydroxy-3-methylpentanoate + NADP(+) = (S)-2-ethyl-2-hydroxy-3-oxobutanoate + NADPH + H(+). It participates in amino-acid biosynthesis; L-isoleucine biosynthesis; L-isoleucine from 2-oxobutanoate: step 2/4. Its pathway is amino-acid biosynthesis; L-valine biosynthesis; L-valine from pyruvate: step 2/4. Its function is as follows. Involved in the biosynthesis of branched-chain amino acids (BCAA). Catalyzes an alkyl-migration followed by a ketol-acid reduction of (S)-2-acetolactate (S2AL) to yield (R)-2,3-dihydroxy-isovalerate. In the isomerase reaction, S2AL is rearranged via a Mg-dependent methyl migration to produce 3-hydroxy-3-methyl-2-ketobutyrate (HMKB). In the reductase reaction, this 2-ketoacid undergoes a metal-dependent reduction by NADPH to yield (R)-2,3-dihydroxy-isovalerate. The sequence is that of Ketol-acid reductoisomerase (NADP(+)) from Tremblaya princeps.